Here is a 376-residue protein sequence, read N- to C-terminus: tRNA-specific 2-thiouridylase MnmA (376 aa).

Residues 14-21 (GMSGGVDS) and M40 each bind ATP. The interval 100 to 102 (NPD) is interaction with target base in tRNA. The Nucleophile role is filled by C105. A disulfide bridge connects residues C105 and C202. An ATP-binding site is contributed by G129. Positions 152–154 (KDQ) are interaction with tRNA. The Cysteine persulfide intermediate role is filled by C202. Residues 315 to 316 (RY) form an interaction with tRNA region.

This sequence belongs to the MnmA/TRMU family.

It localises to the cytoplasm. It catalyses the reaction S-sulfanyl-L-cysteinyl-[protein] + uridine(34) in tRNA + AH2 + ATP = 2-thiouridine(34) in tRNA + L-cysteinyl-[protein] + A + AMP + diphosphate + H(+). In terms of biological role, catalyzes the 2-thiolation of uridine at the wobble position (U34) of tRNA, leading to the formation of s(2)U34. The chain is tRNA-specific 2-thiouridylase MnmA from Lactococcus lactis subsp. cremoris (strain MG1363).